The primary structure comprises 423 residues: COP9 signalosome complex subunit 3 (423 aa).

Alanine 2 carries the N-acetylalanine modification. Residues 197–365 enclose the PCI domain; that stretch reads NFERALYFYE…GMVSFHDNPE (169 aa). The interval 402–423 is disordered; the sequence is QFVQKSMGSQEDDSGNKPSSYS. Residues serine 407, serine 410, and serine 423 each carry the phosphoserine modification.

This sequence belongs to the CSN3 family. As to quaternary structure, component of the CSN complex, composed of COPS1/GPS1, COPS2, COPS3, COPS4, COPS5, COPS6, COPS7 (COPS7A or COPS7B), COPS8 and COPS9. In the complex, it probably interacts directly with COPS1, COPS4, COPS8 and COPS9. Interacts with CK2 and PKD. Interacts with the translation initiation factor EIF3S6 and IKBKG. Interacts with ERCC6.

It is found in the cytoplasm. The protein resides in the nucleus. Its function is as follows. Component of the COP9 signalosome complex (CSN), a complex involved in various cellular and developmental processes. The CSN complex is an essential regulator of the ubiquitin (Ubl) conjugation pathway by mediating the deneddylation of the cullin subunits of SCF-type E3 ligase complexes, leading to decrease the Ubl ligase activity of SCF-type complexes such as SCF, CSA or DDB2. The complex is also involved in phosphorylation of p53/TP53, c-jun/JUN, IkappaBalpha/NFKBIA, ITPK1 and IRF8/ICSBP, possibly via its association with CK2 and PKD kinases. CSN-dependent phosphorylation of TP53 and JUN promotes and protects degradation by the Ubl system, respectively. Essential to maintain the survival of epiblast cells and thus the development of the postimplantation embryo. In Bos taurus (Bovine), this protein is COP9 signalosome complex subunit 3 (COPS3).